A 674-amino-acid polypeptide reads, in one-letter code: Methionine--tRNA ligase (674 aa).

A 'HIGH' region motif is present at residues 11–21; sequence PYANGDLHLGH. Cys-142, Cys-145, Cys-155, and Cys-158 together coordinate Zn(2+). The 'KMSKS' region signature appears at 330–334; it reads KMSKS. Lys-333 serves as a coordination point for ATP. Positions 574–674 constitute a tRNA-binding domain; it reads DFMKVDLRIA…EGAQPGMRVK (101 aa).

This sequence belongs to the class-I aminoacyl-tRNA synthetase family. MetG type 1 subfamily. As to quaternary structure, homodimer. Requires Zn(2+) as cofactor.

The protein resides in the cytoplasm. The enzyme catalyses tRNA(Met) + L-methionine + ATP = L-methionyl-tRNA(Met) + AMP + diphosphate. Its function is as follows. Is required not only for elongation of protein synthesis but also for the initiation of all mRNA translation through initiator tRNA(fMet) aminoacylation. The sequence is that of Methionine--tRNA ligase from Francisella tularensis subsp. holarctica (strain OSU18).